Here is a 383-residue protein sequence, read N- to C-terminus: MKLIRKDIEKDNAGQVTLIPEEAEDMWHTYNLLHVGDSLQASTIRKVQTESSTGSVGSNRVRTTLTICVETIDFDSQACQLRVKGINIQENQYVKMGAYHTIELEPNRKFTLAKKQWDSIVLERIEQACDPAFSADVAAVVMQEGLAHICLVTPSMTLLRAKIETSIPRKRRGNCTQHEKALEKFYEQVMQGILRHINFDVVKVVLVASPGFVREQFCEFLFLRAVKQDLKILLENRGKFLQVHSSSGRKYSLTEVLCDPAVTARLSDTKAACEIKALGDFYKMLQHEPDRAFYGIKQVEKANEALAVDTLLVTDELFRHQDVPTRTRYVRLVDSVKDNGGTVRIFSSLHVSGEQLNQLTGVAAILRFPVADLSDEESSSDED.

It belongs to the eukaryotic release factor 1 family. Pelota subfamily. Component of the Pelota-HBS1L complex, also named Dom34-Hbs1 complex, composed of PELO and HBS1L. A divalent metal cation is required as a cofactor.

It is found in the cytoplasm. Its function is as follows. Component of the Pelota-HBS1L complex, a complex that recognizes stalled ribosomes and triggers the No-Go Decay (NGD) pathway. In the Pelota-HBS1L complex, PELO recognizes ribosomes stalled at the 3' end of an mRNA and engages stalled ribosomes by destabilizing mRNA in the mRNA channel. Following mRNA extraction from stalled ribosomes by the SKI complex, the Pelota-HBS1L complex promotes recruitment of ABCE1, which drives the disassembly of stalled ribosomes, followed by degradation of damaged mRNAs as part of the NGD pathway. This is Protein pelota homolog (pelo) from Xenopus laevis (African clawed frog).